Consider the following 143-residue polypeptide: Alpha-S2-casein-like B (143 aa).

The N-terminal stretch at 1 to 15 is a signal peptide; sequence MKFIILTCLLAVALA.

Belongs to the alpha-casein family. As to expression, mammary gland specific. Secreted in milk.

It localises to the secreted. Functionally, important role in the capacity of milk to transport calcium phosphate. This Mus musculus (Mouse) protein is Alpha-S2-casein-like B (Csn1s2b).